The primary structure comprises 521 residues: Ribonuclease Y (521 aa).

The chain crosses the membrane as a helical span at residues 5–25 (TVWILISILLATVGAVVGFFV). The tract at residues 87 to 117 (KQENRLMQKEENLDRKDETLDNRERQLEKKE) is disordered. A KH domain is found at 211 to 274 (TVSVVNLPND…ETARIALDKL (64 aa)). An HD domain is found at 337 to 430 (VLKHSMEVAY…VAAADALSAA (94 aa)).

It belongs to the RNase Y family.

The protein localises to the cell membrane. Functionally, endoribonuclease that initiates mRNA decay. This Bacillus mycoides (strain KBAB4) (Bacillus weihenstephanensis) protein is Ribonuclease Y.